The following is a 690-amino-acid chain: Glycine--tRNA ligase beta subunit (690 aa).

This sequence belongs to the class-II aminoacyl-tRNA synthetase family. In terms of assembly, tetramer of two alpha and two beta subunits.

The protein localises to the cytoplasm. The catalysed reaction is tRNA(Gly) + glycine + ATP = glycyl-tRNA(Gly) + AMP + diphosphate. This Desulfatibacillum aliphaticivorans protein is Glycine--tRNA ligase beta subunit.